A 327-amino-acid chain; its full sequence is Delta(3,5)-Delta(2,4)-dienoyl-CoA isomerase, mitochondrial (327 aa).

The N-terminal 33 residues, 1–33 (MATAMTVSSKLLGLLMQQLRGTRQLYFNVSLRS), are a transit peptide targeting the mitochondrion. Residues 115–119 (SGIDL) and Gly173 contribute to the substrate site. An N6-succinyllysine modification is found at Lys230. Position 267 is a phosphoserine (Ser267). Lys316 is modified (N6-succinyllysine). The Microbody targeting signal signature appears at 325 to 327 (SKL). Lys326 carries the post-translational modification N6-acetyllysine.

Belongs to the enoyl-CoA hydratase/isomerase family. In terms of assembly, homohexamer. In terms of tissue distribution, expressed in heart and liver (at protein level).

The protein localises to the mitochondrion. Its subcellular location is the peroxisome. It carries out the reaction (3E,5Z)-octadienoyl-CoA = (2E,4E)-octadienoyl-CoA. It catalyses the reaction (3E,5Z,8Z,11Z,14Z)-eicosapentaenoyl-CoA = (2E,4E,8Z,11Z,14Z)-eicosapentaenoyl-CoA. Its pathway is lipid metabolism; fatty acid beta-oxidation. Its function is as follows. Isomerization of 3-trans,5-cis-dienoyl-CoA to 2-trans,4-trans-dienoyl-CoA. The polypeptide is Delta(3,5)-Delta(2,4)-dienoyl-CoA isomerase, mitochondrial (Rattus norvegicus (Rat)).